A 136-amino-acid chain; its full sequence is Large ribosomal subunit protein uL16c (136 aa).

Residues 1 to 20 (MLSPKRTKFRKQHRGRMKGK) are disordered.

The protein belongs to the universal ribosomal protein uL16 family. In terms of assembly, part of the 50S ribosomal subunit.

Its subcellular location is the plastid. The protein localises to the chloroplast. The polypeptide is Large ribosomal subunit protein uL16c (Brachypodium distachyon (Purple false brome)).